We begin with the raw amino-acid sequence, 225 residues long: CRISPR pre-crRNA endoribonuclease Cas5d (225 aa).

The protein belongs to the CRISPR-associated protein Cas5 family. Subtype I-C/Dvulg subfamily. Does not require a metal cofactor. is required as a cofactor.

Its function is as follows. CRISPR (clustered regularly interspaced short palindromic repeat) is an adaptive immune system that provides protection against mobile genetic elements (viruses, transposable elements and conjugative plasmids). CRISPR clusters contain spacers, sequences complementary to antecedent mobile elements, and target invading nucleic acids. CRISPR clusters are transcribed and processed into CRISPR RNA (crRNA). This protein is a sequence-specific endonuclease that cleaves pre-crRNA at G21 into mature crRNA. Does not cleave pre-crRNA associated with the T.thermophilus strain HB27 Cas5 protein (AC Q746C2) CRISPR locus. The reaction mechanism may proceed by an intramolecular attack of the 2'-hydroxyl group of G21 on the scissile phosphodiester, cutting the precursor 3' to G21 residue yielding 5'-hydroxyl and 2' and/or 3' ends lacking a hydroxyl group (perhaps a 2'/3' cyclic phosphodiester). The polypeptide is CRISPR pre-crRNA endoribonuclease Cas5d (Mannheimia succiniciproducens (strain KCTC 0769BP / MBEL55E)).